The following is a 92-amino-acid chain: Small ribosomal subunit protein uS17 (92 aa).

It belongs to the universal ribosomal protein uS17 family. As to quaternary structure, part of the 30S ribosomal subunit.

In terms of biological role, one of the primary rRNA binding proteins, it binds specifically to the 5'-end of 16S ribosomal RNA. The sequence is that of Small ribosomal subunit protein uS17 from Cupriavidus pinatubonensis (strain JMP 134 / LMG 1197) (Cupriavidus necator (strain JMP 134)).